Consider the following 189-residue polypeptide: Glucose-6-phosphate isomerase (189 aa).

Fe cation is bound by residues His88, His90, Glu97, and His136.

Belongs to the archaeal-type GPI family. Homodimer. Fe cation is required as a cofactor.

The protein localises to the cytoplasm. It catalyses the reaction alpha-D-glucose 6-phosphate = beta-D-fructose 6-phosphate. It participates in carbohydrate degradation; glycolysis; D-glyceraldehyde 3-phosphate and glycerone phosphate from D-glucose: step 2/4. Inhibited by mannose 6-phosphate, fructose 1-phosphate and fructose 1,6-bisphosphate. This is Glucose-6-phosphate isomerase (pgiA) from Pyrococcus furiosus (strain ATCC 43587 / DSM 3638 / JCM 8422 / Vc1).